We begin with the raw amino-acid sequence, 109 residues long: ATP synthase subunit c (109 aa).

2 helical membrane-spanning segments follow: residues 42–62 (YIGT…QGFS) and 88–108 (LALA…IIFV).

It belongs to the ATPase C chain family. F-type ATPases have 2 components, F(1) - the catalytic core - and F(0) - the membrane proton channel. F(1) has five subunits: alpha(3), beta(3), gamma(1), delta(1), epsilon(1). F(0) has three main subunits: a(1), b(2) and c(10-14). The alpha and beta chains form an alternating ring which encloses part of the gamma chain. F(1) is attached to F(0) by a central stalk formed by the gamma and epsilon chains, while a peripheral stalk is formed by the delta and b chains.

Its subcellular location is the cell membrane. F(1)F(0) ATP synthase produces ATP from ADP in the presence of a proton or sodium gradient. F-type ATPases consist of two structural domains, F(1) containing the extramembraneous catalytic core and F(0) containing the membrane proton channel, linked together by a central stalk and a peripheral stalk. During catalysis, ATP synthesis in the catalytic domain of F(1) is coupled via a rotary mechanism of the central stalk subunits to proton translocation. In terms of biological role, key component of the F(0) channel; it plays a direct role in translocation across the membrane. A homomeric c-ring of between 10-14 subunits forms the central stalk rotor element with the F(1) delta and epsilon subunits. In Ureaplasma urealyticum serovar 10 (strain ATCC 33699 / Western), this protein is ATP synthase subunit c.